The following is a 268-amino-acid chain: Myeloid leukemia factor 1 (268 aa).

Phosphoserine occurs at positions 8, 32, and 34. Disordered regions lie at residues 44–66 (ISDGRGRAHNRRGHNDGEDSLTH) and 209–268 (GRHN…SNKK). Residues 50-125 (RAHNRRGHND…IGDEPPKVFQ (76 aa)) form an interaction with COPS3 region. Composition is skewed to basic and acidic residues over residues 56–65 (GHNDGEDSLT) and 226–237 (PGSRELKRREKP).

It belongs to the MLF family. As to quaternary structure, interacts with CENPU. Also interacts with NRBP1/MADM, YWHAZ/14-3-3-zeta and HNRPUL2/MANP. NRBP1 recruits a serine kinase which phosphorylates both itself and MLF1. Phosphorylated MLF1 then binds to YWHAZ and is retained in the cytoplasm. Retained in the nucleus by binding to HNRPUL2. Binds to COPS3/CSN3 which is required for suppression of COP1 and activation of p53. Post-translationally, phosphorylation is required for binding to YWHAZ. Most abundant in testis, ovary, skeletal muscle, heart, kidney and colon. Low expression in spleen, thymus and peripheral blood leukocytes.

It localises to the cytoplasm. Its subcellular location is the nucleus. It is found in the cell projection. The protein localises to the cilium. The protein resides in the cytoskeleton. It localises to the cilium basal body. Involved in lineage commitment of primary hemopoietic progenitors by restricting erythroid formation and enhancing myeloid formation. Interferes with erythropoietin-induced erythroid terminal differentiation by preventing cells from exiting the cell cycle through suppression of CDKN1B/p27Kip1 levels. Suppresses COP1 activity via CSN3 which activates p53 and induces cell cycle arrest. Binds DNA and affects the expression of a number of genes so may function as a transcription factor in the nucleus. The chain is Myeloid leukemia factor 1 (MLF1) from Homo sapiens (Human).